The following is a 624-amino-acid chain: ATP-dependent RNA helicase MRH4, mitochondrial (624 aa).

The N-terminal 43 residues, 1 to 43 (MSPVASTCLLCEMRTVVWGWQPAVPQPWHFVRFASSARLARRK), are a transit peptide targeting the mitochondrion. The tract at residues 41-120 (RRKPARMALS…KDAADKKQDG (80 aa)) is disordered. Residues 86 to 119 (RLPDRPIPRSDAELKRSSSDLNNKEKDAADKKQD) are compositionally biased toward basic and acidic residues. Positions 151 to 184 (TSFDQFPLLPQVREAVYANAFPTLTEISPTPIQR) match the Q motif motif. The region spanning 212–427 (EEELFHFDQF…EKKFPEMKRL (216 aa)) is the Helicase ATP-binding domain. 225–232 (AETGTGKT) contributes to the ATP binding site. Residues 374–377 (DEAD) carry the DEAD box motif. Positions 438 to 624 (RVQLGVVDVD…EAMFRGQALI (187 aa)) constitute a Helicase C-terminal domain.

This sequence belongs to the DEAD box helicase family. MRH4 subfamily.

The protein localises to the mitochondrion. The catalysed reaction is ATP + H2O = ADP + phosphate + H(+). Its function is as follows. ATP-binding RNA helicase involved in mitochondrial RNA metabolism. Required for maintenance of mitochondrial DNA. This chain is ATP-dependent RNA helicase MRH4, mitochondrial (MRH4), found in Ajellomyces capsulatus (strain NAm1 / WU24) (Darling's disease fungus).